Reading from the N-terminus, the 1051-residue chain is Carbamoyl phosphate synthase large chain (1051 aa).

The carboxyphosphate synthetic domain stretch occupies residues 1 to 399; the sequence is MKETPKKVLV…SLQKAVRMLD (399 aa). ATP contacts are provided by arginine 127, arginine 167, glycine 173, glycine 174, lysine 206, leucine 208, glutamate 213, glycine 239, valine 240, histidine 241, glutamine 282, and glutamate 296. In terms of domain architecture, ATP-grasp 1 spans 131-325; it reads RETMIENNLP…LAYVSAKLAL (195 aa). Mg(2+) contacts are provided by glutamine 282, glutamate 296, and asparagine 298. Positions 282, 296, and 298 each coordinate Mn(2+). Residues 400–548 are oligomerization domain; sequence IGEPGVVGGK…LTYNGTEDDL (149 aa). Residues 549–930 are carbamoyl phosphate synthetic domain; the sequence is EFSQGNKLLM…LKSWLSSIPN (382 aa). The region spanning 673–863 is the ATP-grasp 2 domain; sequence SKLLDKLGIS…LINESMKAIF (191 aa). 10 residues coordinate ATP: arginine 709, lysine 748, isoleucine 750, glutamate 755, glycine 779, valine 780, histidine 781, serine 782, glutamine 822, and glutamate 834. Residues glutamine 822, glutamate 834, and asparagine 836 each contribute to the Mg(2+) site. Positions 822, 834, and 836 each coordinate Mn(2+). Residues 930–1051 enclose the MGS-like domain; that stretch reads NRIPNKNGIA…FEISEYGGGI (122 aa). Residues 931 to 1051 are allosteric domain; it reads RIPNKNGIAL…FEISEYGGGI (121 aa).

It belongs to the CarB family. Composed of two chains; the small (or glutamine) chain promotes the hydrolysis of glutamine to ammonia, which is used by the large (or ammonia) chain to synthesize carbamoyl phosphate. Tetramer of heterodimers (alpha,beta)4. The cofactor is Mg(2+). Mn(2+) serves as cofactor.

It carries out the reaction hydrogencarbonate + L-glutamine + 2 ATP + H2O = carbamoyl phosphate + L-glutamate + 2 ADP + phosphate + 2 H(+). The catalysed reaction is hydrogencarbonate + NH4(+) + 2 ATP = carbamoyl phosphate + 2 ADP + phosphate + 2 H(+). Its pathway is amino-acid biosynthesis; L-arginine biosynthesis; carbamoyl phosphate from bicarbonate: step 1/1. It participates in pyrimidine metabolism; UMP biosynthesis via de novo pathway; (S)-dihydroorotate from bicarbonate: step 1/3. Functionally, large subunit of the glutamine-dependent carbamoyl phosphate synthetase (CPSase). CPSase catalyzes the formation of carbamoyl phosphate from the ammonia moiety of glutamine, carbonate, and phosphate donated by ATP, constituting the first step of 2 biosynthetic pathways, one leading to arginine and/or urea and the other to pyrimidine nucleotides. The large subunit (synthetase) binds the substrates ammonia (free or transferred from glutamine from the small subunit), hydrogencarbonate and ATP and carries out an ATP-coupled ligase reaction, activating hydrogencarbonate by forming carboxy phosphate which reacts with ammonia to form carbamoyl phosphate. The chain is Carbamoyl phosphate synthase large chain from Saccharolobus islandicus (strain M.16.4 / Kamchatka #3) (Sulfolobus islandicus).